The following is a 407-amino-acid chain: 1-deoxy-D-xylulose 5-phosphate reductoisomerase (407 aa).

NADPH-binding residues include threonine 25, glycine 26, serine 27, isoleucine 28, asparagine 53, and asparagine 136. Lysine 137 provides a ligand contact to 1-deoxy-D-xylulose 5-phosphate. Glutamate 138 contributes to the NADPH binding site. Position 162 (aspartate 162) interacts with Mn(2+). 1-deoxy-D-xylulose 5-phosphate is bound by residues serine 163, glutamate 164, serine 188, and histidine 211. Mn(2+) is bound at residue glutamate 164. Glycine 217 serves as a coordination point for NADPH. 1-deoxy-D-xylulose 5-phosphate-binding residues include serine 224, asparagine 229, lysine 230, and glutamate 233. Glutamate 233 serves as a coordination point for Mn(2+).

It belongs to the DXR family. Mg(2+) is required as a cofactor. Requires Mn(2+) as cofactor.

It carries out the reaction 2-C-methyl-D-erythritol 4-phosphate + NADP(+) = 1-deoxy-D-xylulose 5-phosphate + NADPH + H(+). The protein operates within isoprenoid biosynthesis; isopentenyl diphosphate biosynthesis via DXP pathway; isopentenyl diphosphate from 1-deoxy-D-xylulose 5-phosphate: step 1/6. Catalyzes the NADPH-dependent rearrangement and reduction of 1-deoxy-D-xylulose-5-phosphate (DXP) to 2-C-methyl-D-erythritol 4-phosphate (MEP). This Bradyrhizobium sp. (strain BTAi1 / ATCC BAA-1182) protein is 1-deoxy-D-xylulose 5-phosphate reductoisomerase.